A 512-amino-acid polypeptide reads, in one-letter code: Cytochrome P450 monooxygenase astB (512 aa).

A helical membrane pass occupies residues 5 to 25 (DLSFPAAIGAVFGAVAISVAA). Cysteine 452 is a binding site for heme.

This sequence belongs to the cytochrome P450 family. The cofactor is heme.

The protein localises to the membrane. It functions in the pathway secondary metabolite biosynthesis; terpenoid biosynthesis. Functionally, cytochrome P450 monooxygenase; part of the gene cluster that mediates the biosynthesis of the sesquiterpenoid aspterric acid (AA), an inhibitor of dihydroxy-acid dehydratase (DHAD) effective as an herbicide. AstB catalyzes the second step within the pathway and converts (-)-daucane produced by the terpene cyclase astA into an alpha-epoxy carboxylate intermediate which is further converted into the tricyclic aspterric acid by the cytochrome P450 monooxygenase astC. The polypeptide is Cytochrome P450 monooxygenase astB (Aspergillus terreus (strain NIH 2624 / FGSC A1156)).